Reading from the N-terminus, the 115-residue chain is Cytochrome c oxidase assembly protein COX16 homolog, mitochondrial (115 aa).

The Mitochondrial matrix segment spans residues 1–6 (MSRLKF). A helical transmembrane segment spans residues 7-29 (VRVGLPFFAIVLGSAYGLHFFQQ). Over 30–115 (VRFDFRKIKQ…RKVRELKSNV (86 aa)) the chain is Mitochondrial intermembrane.

It belongs to the COX16 family.

Its subcellular location is the mitochondrion inner membrane. In terms of biological role, required for the assembly of the mitochondrial respiratory chain complex IV (CIV), also known as cytochrome c oxidase. This Caenorhabditis elegans protein is Cytochrome c oxidase assembly protein COX16 homolog, mitochondrial.